Here is a 280-residue protein sequence, read N- to C-terminus: F420-dependent methylenetetrahydromethanopterin dehydrogenase (280 aa).

The protein belongs to the MTD family.

It catalyses the reaction 5,10-methylenetetrahydromethanopterin + oxidized coenzyme F420-(gamma-L-Glu)(n) + 2 H(+) = 5,10-methenyl-5,6,7,8-tetrahydromethanopterin + reduced coenzyme F420-(gamma-L-Glu)(n). It participates in one-carbon metabolism; methanogenesis from CO(2); 5,10-methylene-5,6,7,8-tetrahydromethanopterin from 5,10-methenyl-5,6,7,8-tetrahydromethanopterin (coenzyme F420 route): step 1/1. Functionally, catalyzes the reversible reduction of methenyl-H(4)MPT(+) to methylene-H(4)MPT. The protein is F420-dependent methylenetetrahydromethanopterin dehydrogenase of Methanocorpusculum labreanum (strain ATCC 43576 / DSM 4855 / Z).